An 82-amino-acid chain; its full sequence is Cytochrome b559 subunit alpha (82 aa).

The helical transmembrane segment at 22–36 threads the bilayer; that stretch reads VIHAVTLPSIFLAGF. A heme-binding site is contributed by His-24.

The protein belongs to the PsbE/PsbF family. Heterodimer of an alpha subunit and a beta subunit. PSII is composed of 1 copy each of membrane proteins PsbA, PsbB, PsbC, PsbD, PsbE, PsbF, PsbH, PsbI, PsbJ, PsbK, PsbL, PsbM, PsbT, PsbX, PsbY, PsbZ, Psb30/Ycf12, peripheral proteins PsbO, CyanoQ (PsbQ), PsbU, PsbV and a large number of cofactors. It forms dimeric complexes. It depends on heme b as a cofactor.

It localises to the cellular thylakoid membrane. In terms of biological role, this b-type cytochrome is tightly associated with the reaction center of photosystem II (PSII). PSII is a light-driven water:plastoquinone oxidoreductase that uses light energy to abstract electrons from H(2)O, generating O(2) and a proton gradient subsequently used for ATP formation. It consists of a core antenna complex that captures photons, and an electron transfer chain that converts photonic excitation into a charge separation. The protein is Cytochrome b559 subunit alpha of Synechococcus sp. (strain CC9605).